A 636-amino-acid chain; its full sequence is Ligand-gated ion channel 4 (636 aa).

The N-terminal stretch at 1–25 is a signal peptide; the sequence is MVICHSCTTFCILLVIDLVPCRIVG. At 26 to 326 the chain is on the extracellular side; that stretch reads MENVENRVMF…IHMHRRPLFY (301 aa). N-linked (GlcNAc...) asparagine glycans are attached at residues N45, N141, N179, and N227. An intrachain disulfide couples C240 to C254. N284 carries an N-linked (GlcNAc...) asparagine glycan. The next 3 membrane-spanning stretches (helical) occupy residues 327-347, 357-377, and 383-403; these read VFNH…GFLM, MIIT…ESIP, and VPLI…ATCV. At 404–602 the chain is on the cytoplasmic side; it reads NVITLNMHRN…QLASVVDRLL (199 aa). Residues 603-623 traverse the membrane as a helical segment; that stretch reads LCLFCTATLFTIICLLIVPVV.

Belongs to the ligand-gated ion channel (TC 1.A.9) family.

Its subcellular location is the postsynaptic cell membrane. It localises to the cell membrane. Its function is as follows. Acetylcholine receptor. The sequence is that of Ligand-gated ion channel 4 from Caenorhabditis briggsae.